The following is a 428-amino-acid chain: Arabinosyltransferase RRA2 (428 aa).

At M1–R15 the chain is on the cytoplasmic side. The helical; Signal-anchor for type II membrane protein transmembrane segment at I16–N36 threads the bilayer. Topologically, residues G37–D428 are lumenal. Residues D250–D252 carry the DXD motif motif. N-linked (GlcNAc...) asparagine glycosylation occurs at N278.

The protein belongs to the glycosyltransferase 77 family. In terms of tissue distribution, expressed in roots, rosette and cauline leaves, stems, flowers and siliques.

It is found in the golgi apparatus membrane. In terms of biological role, plays a role in the arabinosylation of cell wall components. Involved in the arabinosylation of extensin proteins in root hair cells. Extensins are structural glycoproteins present in cell walls and its arabinosylation is important for root hair cell development. The protein is Arabinosyltransferase RRA2 of Arabidopsis thaliana (Mouse-ear cress).